A 390-amino-acid polypeptide reads, in one-letter code: 23S rRNA (uracil(747)-C(5))-methyltransferase RlmC (390 aa).

The [4Fe-4S] cluster site is built by cysteine 12, cysteine 20, cysteine 23, and cysteine 100. S-adenosyl-L-methionine contacts are provided by glutamine 225, phenylalanine 254, glutamate 275, and asparagine 322. Cysteine 349 functions as the Nucleophile in the catalytic mechanism.

The protein belongs to the class I-like SAM-binding methyltransferase superfamily. RNA M5U methyltransferase family. RlmC subfamily.

The catalysed reaction is uridine(747) in 23S rRNA + S-adenosyl-L-methionine = 5-methyluridine(747) in 23S rRNA + S-adenosyl-L-homocysteine + H(+). Catalyzes the formation of 5-methyl-uridine at position 747 (m5U747) in 23S rRNA. This Shewanella baltica (strain OS155 / ATCC BAA-1091) protein is 23S rRNA (uracil(747)-C(5))-methyltransferase RlmC.